The chain runs to 364 residues: tRNA-specific 2-thiouridylase MnmA (364 aa).

Residues 12–19 (GISGGVDS) and Met38 contribute to the ATP site. Residues 98 to 100 (NPD) form an interaction with target base in tRNA region. The active-site Nucleophile is Cys103. A disulfide bond links Cys103 and Cys199. ATP is bound at residue Gly127. The segment at 149–151 (KEQ) is interaction with tRNA. Catalysis depends on Cys199, which acts as the Cysteine persulfide intermediate. Positions 311–312 (RY) are interaction with tRNA.

It belongs to the MnmA/TRMU family.

Its subcellular location is the cytoplasm. The catalysed reaction is S-sulfanyl-L-cysteinyl-[protein] + uridine(34) in tRNA + AH2 + ATP = 2-thiouridine(34) in tRNA + L-cysteinyl-[protein] + A + AMP + diphosphate + H(+). Functionally, catalyzes the 2-thiolation of uridine at the wobble position (U34) of tRNA, leading to the formation of s(2)U34. The polypeptide is tRNA-specific 2-thiouridylase MnmA (Hahella chejuensis (strain KCTC 2396)).